A 303-amino-acid chain; its full sequence is Protoheme IX farnesyltransferase (303 aa).

9 consecutive transmembrane segments (helical) span residues 25 to 45 (MGLV…AVVM), 54 to 74 (IPQI…ACAL), 104 to 124 (LLLL…LLNI), 125 to 145 (PSGV…SIWS), 151 to 171 (WNTV…WVAI), 179 to 199 (AIAL…ALAI), 227 to 247 (FIWL…GVVF), 248 to 268 (VVLA…TFKK), and 280 to 300 (FIYS…VSLL).

Belongs to the UbiA prenyltransferase family. Protoheme IX farnesyltransferase subfamily. Interacts with CtaA.

The protein resides in the cell membrane. The enzyme catalyses heme b + (2E,6E)-farnesyl diphosphate + H2O = Fe(II)-heme o + diphosphate. It participates in porphyrin-containing compound metabolism; heme O biosynthesis; heme O from protoheme: step 1/1. Converts heme B (protoheme IX) to heme O by substitution of the vinyl group on carbon 2 of heme B porphyrin ring with a hydroxyethyl farnesyl side group. The polypeptide is Protoheme IX farnesyltransferase (Staphylococcus aureus (strain Mu3 / ATCC 700698)).